The primary structure comprises 504 residues: Putative pentatricopeptide repeat-containing protein At3g28640 (504 aa).

PPR repeat units follow at residues N77–E107, S115–L149, D151–P181, D182–P216, D217–E251, D253–S287, W288–P319, D320–R350, and K356–S390. The interval V391–D470 is type E motif. Positions G471–L501 are type E(+) motif.

This sequence belongs to the PPR family. PCMP-E subfamily.

The chain is Putative pentatricopeptide repeat-containing protein At3g28640 (PCMP-E79) from Arabidopsis thaliana (Mouse-ear cress).